The sequence spans 329 residues: UPF0725 protein EMB2204 (329 aa).

This sequence belongs to the UPF0725 (EMB2204) family.

Functionally, may be involved in embryogenesis. In Arabidopsis thaliana (Mouse-ear cress), this protein is UPF0725 protein EMB2204 (EMB2204).